A 52-amino-acid polypeptide reads, in one-letter code: Conotoxin Cal6.36 (52 aa).

Residues M1 to A22 form the signal peptide. Intrachain disulfides connect C24-C39, C31-C43, and C38-C47.

In terms of tissue distribution, expressed by the venom duct.

It is found in the secreted. Its function is as follows. Probable neurotoxin. This chain is Conotoxin Cal6.36, found in Californiconus californicus (California cone).